We begin with the raw amino-acid sequence, 343 residues long: UPF0324 membrane protein LJ_1117 (343 aa).

10 helical membrane-spanning segments follow: residues 10 to 27, 32 to 54, 64 to 86, 91 to 113, 123 to 145, 157 to 179, 219 to 241, 262 to 284, 288 to 310, and 317 to 339; these read FGLA…GIFL, YVNL…VLPV, IGFI…LNLT, AGIK…TYWL, LAVL…VSPQ, NEVL…EIVI, ALIM…GYWY, IPWF…FPPV, GLVQ…SVNF, and GGTV…IIMS.

The protein belongs to the UPF0324 family.

The protein resides in the cell membrane. The polypeptide is UPF0324 membrane protein LJ_1117 (Lactobacillus johnsonii (strain CNCM I-12250 / La1 / NCC 533)).